Reading from the N-terminus, the 622-residue chain is UvrABC system protein C (622 aa).

One can recognise a GIY-YIG domain in the interval 13–92; the sequence is EKPGVYLMKN…IKKYRPKYNI (80 aa). Positions 204–239 constitute a UVR domain; it reads KDILDKLKNQMEEASNSLQFEKAASLRDKIFAVKKI.

It belongs to the UvrC family. Interacts with UvrB in an incision complex.

Its subcellular location is the cytoplasm. Functionally, the UvrABC repair system catalyzes the recognition and processing of DNA lesions. UvrC both incises the 5' and 3' sides of the lesion. The N-terminal half is responsible for the 3' incision and the C-terminal half is responsible for the 5' incision. The polypeptide is UvrABC system protein C (Clostridium tetani (strain Massachusetts / E88)).